We begin with the raw amino-acid sequence, 286 residues long: MTDRQPLISKNDDIINNLTRFYTELTEFEKIIKDVGTGRDTTTLRSTLHKKKVNLADDLKVIAQQIKQLPSSKLPKFQQEKIVKQFKEASSKFEELLSTSNKKESSHEPIVPSQQQQQQQNNGNSNNNGYNTRGGYNQQQQQQQQQYNDYTNNNNNNNNNEVEQYNRLEQALKSGIEQDEEEYTNRILDERNANARQIARDVAMLKEAMDDIAVMVGEQGEMLEKVDDNVTNADVAVEDAVVELEKAYVYKSSYRKKMIIFVICLLVTLVAVGIFLAIYYGVIKKK.

The Cytoplasmic segment spans residues 1–257; the sequence is MTDRQPLISK…YVYKSSYRKK (257 aa). Over residues 97–107 the composition is skewed to basic and acidic residues; the sequence is LSTSNKKESSH. The segment at 97–160 is disordered; that stretch reads LSTSNKKESS…TNNNNNNNNN (64 aa). The segment covering 114 to 160 has biased composition (low complexity); it reads QQQQQQQNNGNSNNNGYNTRGGYNQQQQQQQQQYNDYTNNNNNNNNN. A t-SNARE coiled-coil homology domain is found at 185–247; sequence NRILDERNAN…EDAVVELEKA (63 aa). Residues 258 to 278 form a helical; Anchor for type IV membrane protein membrane-spanning segment; sequence MIIFVICLLVTLVAVGIFLAI. Over 279 to 286 the chain is Vesicular; it reads YYGVIKKK.

It belongs to the syntaxin family.

Its subcellular location is the membrane. The polypeptide is Probable syntaxin-7B (syn7B) (Dictyostelium discoideum (Social amoeba)).